Consider the following 307-residue polypeptide: D-alanine--D-alanine ligase (307 aa).

One can recognise an ATP-grasp domain in the interval 101–301; it reads KTVMRAAGVS…FGELVRWMVE (201 aa). 127 to 182 is a binding site for ATP; that stretch reads PLTPPYVVKPIAEGSSMGVIIVRDERSHPPQILASDEWVYGEEVLAETYVAGRELT. Residues D251, E268, and N270 each coordinate Mg(2+).

This sequence belongs to the D-alanine--D-alanine ligase family. Requires Mg(2+) as cofactor. The cofactor is Mn(2+).

Its subcellular location is the cytoplasm. It carries out the reaction 2 D-alanine + ATP = D-alanyl-D-alanine + ADP + phosphate + H(+). The protein operates within cell wall biogenesis; peptidoglycan biosynthesis. In terms of biological role, cell wall formation. This is D-alanine--D-alanine ligase from Methylorubrum extorquens (strain PA1) (Methylobacterium extorquens).